Consider the following 267-residue polypeptide: Interleukin-1 beta (267 aa).

Residues 1–114 constitute a propeptide that is removed on maturation; it reads MAIVPEPAKE…ETCNDDFVCD (114 aa).

This sequence belongs to the IL-1 family. In terms of assembly, (Microbial infection) Interacts with African swine fever virus (ASFV) protein L83L. As to quaternary structure, monomer. In its precursor form, weakly interacts with full-length MEFV; the mature cytokine does not interact at all. Interacts with integrins ITGAV:ITGBV and ITGA5:ITGB1; integrin-binding is required for IL1B signaling. Interacts with cargo receptor TMED10; the interaction is direct and is required for the secretion of IL1B mature form. Interacts with HSP90AB1; the interaction facilitates cargo translocation into the ERGIC. Interacts with HSP90B1; the interaction facilitates cargo translocation into the ERGIC.

Its subcellular location is the cytoplasm. It localises to the cytosol. The protein localises to the secreted. It is found in the lysosome. The protein resides in the extracellular exosome. In terms of biological role, potent pro-inflammatory cytokine. Initially discovered as the major endogenous pyrogen, induces prostaglandin synthesis, neutrophil influx and activation, T-cell activation and cytokine production, B-cell activation and antibody production, and fibroblast proliferation and collagen production. Promotes Th17 differentiation of T-cells. Synergizes with IL12/interleukin-12 to induce IFNG synthesis from T-helper 1 (Th1) cells. Plays a role in angiogenesis by inducing VEGF production synergistically with TNF and IL6. Involved in transduction of inflammation downstream of pyroptosis: its mature form is specifically released in the extracellular milieu by passing through the gasdermin-D (GSDMD) pore. This Sus scrofa (Pig) protein is Interleukin-1 beta (IL1B).